The following is a 700-amino-acid chain: Elongation factor G 2 (700 aa).

Positions 8 to 290 (ERYRNIGISA…AVIDFLPSPV (283 aa)) constitute a tr-type G domain. GTP contacts are provided by residues 17 to 24 (AHIDAGKT), 88 to 92 (DTPGH), and 142 to 145 (NKMD).

This sequence belongs to the TRAFAC class translation factor GTPase superfamily. Classic translation factor GTPase family. EF-G/EF-2 subfamily.

Its subcellular location is the cytoplasm. Functionally, catalyzes the GTP-dependent ribosomal translocation step during translation elongation. During this step, the ribosome changes from the pre-translocational (PRE) to the post-translocational (POST) state as the newly formed A-site-bound peptidyl-tRNA and P-site-bound deacylated tRNA move to the P and E sites, respectively. Catalyzes the coordinated movement of the two tRNA molecules, the mRNA and conformational changes in the ribosome. This is Elongation factor G 2 from Burkholderia orbicola (strain AU 1054).